We begin with the raw amino-acid sequence, 493 residues long: Probable phospho-2-dehydro-3-deoxyheptonate aldolase, chloroplastic (493 aa).

A chloroplast-targeting transit peptide spans 1–58 (MAMSNTSALASKLLPSCKPHQPTLTFFSPSTTCQKKPRSSRPISAAVHVTQPPKTPIS).

This sequence belongs to the class-II DAHP synthase family.

It localises to the plastid. Its subcellular location is the chloroplast. The enzyme catalyses D-erythrose 4-phosphate + phosphoenolpyruvate + H2O = 7-phospho-2-dehydro-3-deoxy-D-arabino-heptonate + phosphate. It participates in metabolic intermediate biosynthesis; chorismate biosynthesis; chorismate from D-erythrose 4-phosphate and phosphoenolpyruvate: step 1/7. The polypeptide is Probable phospho-2-dehydro-3-deoxyheptonate aldolase, chloroplastic (DHS1) (Catharanthus roseus (Madagascar periwinkle)).